The following is a 252-amino-acid chain: Ribosomal RNA small subunit methyltransferase J (252 aa).

Residues 126-127 (ER) and Asp176 contribute to the S-adenosyl-L-methionine site.

It belongs to the methyltransferase superfamily. RsmJ family.

It is found in the cytoplasm. It carries out the reaction guanosine(1516) in 16S rRNA + S-adenosyl-L-methionine = N(2)-methylguanosine(1516) in 16S rRNA + S-adenosyl-L-homocysteine + H(+). Its function is as follows. Specifically methylates the guanosine in position 1516 of 16S rRNA. The polypeptide is Ribosomal RNA small subunit methyltransferase J (Bdellovibrio bacteriovorus (strain ATCC 15356 / DSM 50701 / NCIMB 9529 / HD100)).